We begin with the raw amino-acid sequence, 236 residues long: Large ribosomal subunit protein uL1 (236 aa).

It belongs to the universal ribosomal protein uL1 family. In terms of assembly, part of the 50S ribosomal subunit.

Binds directly to 23S rRNA. The L1 stalk is quite mobile in the ribosome, and is involved in E site tRNA release. Its function is as follows. Protein L1 is also a translational repressor protein, it controls the translation of the L11 operon by binding to its mRNA. This is Large ribosomal subunit protein uL1 from Kocuria rhizophila (strain ATCC 9341 / DSM 348 / NBRC 103217 / DC2201).